Reading from the N-terminus, the 597-residue chain is ATP-dependent lipid A-core flippase (597 aa).

Helical transmembrane passes span 26-46 (LWPYIKPLIWVLIGAIVAMAV), 76-96 (WFVPAAVIGLALIRSLSQYAS), 138-158 (AIVFEVNQILNVLLSVLVTLV), 164-184 (VVFLLGYLFYLNWRLTLIVAV), 263-283 (QPLTQFLASIALAVVITIAVV), and 292-312 (VGGFVAFVTSMLLIISPLKHL). The ABC transmembrane type-1 domain maps to 38-321 (IGAIVAMAVS…LMDVNQPLQR (284 aa)). The 238-residue stretch at 353 to 590 (VEFRDVSFVY…DGLYAHLHRI (238 aa)) folds into the ABC transporter domain. Residue 390 to 397 (GPSGSGKT) coordinates ATP.

Belongs to the ABC transporter superfamily. Lipid exporter (TC 3.A.1.106) family. In terms of assembly, homodimer.

The protein localises to the cell inner membrane. The enzyme catalyses ATP + H2O + lipid A-core oligosaccharideSide 1 = ADP + phosphate + lipid A-core oligosaccharideSide 2.. Functionally, involved in lipopolysaccharide (LPS) biosynthesis. Translocates lipid A-core from the inner to the outer leaflet of the inner membrane. Transmembrane domains (TMD) form a pore in the inner membrane and the ATP-binding domain (NBD) is responsible for energy generation. The chain is ATP-dependent lipid A-core flippase from Paraburkholderia xenovorans (strain LB400).